Reading from the N-terminus, the 319-residue chain is NADH-quinone oxidoreductase subunit H 2 (319 aa).

9 consecutive transmembrane segments (helical) span residues 1-21 (MIGM…LLVL), 77-97 (ILAP…VAIG), 107-127 (VGLL…VLGA), 147-167 (LAYE…AGSF), 179-199 (VWFV…GIAA), 214-234 (LIAG…FLGE), 238-258 (VLLV…GPWL), 262-282 (VWFG…RATL), and 293-313 (FAWK…GIVV).

This sequence belongs to the complex I subunit 1 family. NDH-1 is composed of 14 different subunits. Subunits NuoA, H, J, K, L, M, N constitute the membrane sector of the complex.

It localises to the cell inner membrane. It carries out the reaction a quinone + NADH + 5 H(+)(in) = a quinol + NAD(+) + 4 H(+)(out). Its function is as follows. NDH-1 shuttles electrons from NADH, via FMN and iron-sulfur (Fe-S) centers, to quinones in the respiratory chain. The immediate electron acceptor for the enzyme in this species is believed to be ubiquinone. Couples the redox reaction to proton translocation (for every two electrons transferred, four hydrogen ions are translocated across the cytoplasmic membrane), and thus conserves the redox energy in a proton gradient. This subunit may bind ubiquinone. This chain is NADH-quinone oxidoreductase subunit H 2, found in Rhodopseudomonas palustris (strain ATCC BAA-98 / CGA009).